A 388-amino-acid polypeptide reads, in one-letter code: Carbamoyl phosphate synthase small chain (388 aa).

Residues 1-192 form a CPSase region; the sequence is MPLSDAMPAL…FNPDGTVKNG (192 aa). L-glutamine is bound by residues Ser-51, Gly-244, and Gly-246. The Glutamine amidotransferase type-1 domain occupies 196-382; sequence TVVALDFGVK…VHQMRTTKQA (187 aa). Cys-272 functions as the Nucleophile in the catalytic mechanism. Residues Met-273, Gln-276, Asn-312, and Phe-315 each contribute to the L-glutamine site. Residues His-355 and Glu-357 contribute to the active site.

This sequence belongs to the CarA family. Composed of two chains; the small (or glutamine) chain promotes the hydrolysis of glutamine to ammonia, which is used by the large (or ammonia) chain to synthesize carbamoyl phosphate. Tetramer of heterodimers (alpha,beta)4.

The catalysed reaction is hydrogencarbonate + L-glutamine + 2 ATP + H2O = carbamoyl phosphate + L-glutamate + 2 ADP + phosphate + 2 H(+). The enzyme catalyses L-glutamine + H2O = L-glutamate + NH4(+). The protein operates within amino-acid biosynthesis; L-arginine biosynthesis; carbamoyl phosphate from bicarbonate: step 1/1. It participates in pyrimidine metabolism; UMP biosynthesis via de novo pathway; (S)-dihydroorotate from bicarbonate: step 1/3. In terms of biological role, small subunit of the glutamine-dependent carbamoyl phosphate synthetase (CPSase). CPSase catalyzes the formation of carbamoyl phosphate from the ammonia moiety of glutamine, carbonate, and phosphate donated by ATP, constituting the first step of 2 biosynthetic pathways, one leading to arginine and/or urea and the other to pyrimidine nucleotides. The small subunit (glutamine amidotransferase) binds and cleaves glutamine to supply the large subunit with the substrate ammonia. The polypeptide is Carbamoyl phosphate synthase small chain (Nostoc sp. (strain PCC 7120 / SAG 25.82 / UTEX 2576)).